The following is a 95-amino-acid chain: Large ribosomal subunit protein uL23 (95 aa).

It belongs to the universal ribosomal protein uL23 family. As to quaternary structure, part of the 50S ribosomal subunit. Contacts protein L29, and trigger factor when it is bound to the ribosome.

One of the early assembly proteins it binds 23S rRNA. One of the proteins that surrounds the polypeptide exit tunnel on the outside of the ribosome. Forms the main docking site for trigger factor binding to the ribosome. The protein is Large ribosomal subunit protein uL23 of Coxiella burnetii (strain RSA 493 / Nine Mile phase I).